Here is a 718-residue protein sequence, read N- to C-terminus: MACKYSTLIDSSLYDREGLCPGIDLRRHVAGELEEVGAFRAQEDWRRLVGPLPKPYAGLLGPDFSFITGAVPECHPDRMEIVAYALEFGFMHDDVIDTDVNHASLDEVGHTLDQSRTGKIEDKGSDGKRQMVTQIIREMMAIDPERAMTVAKSWASGVRHSSRRKEDTNFKALEQYIPYRALDVGYMLWHGLVTFGCAITIPNEEEEEAKRLIIPALVQASLLNDLFSFEKEKNDANVQNAVLIVMNEHGCSEEEARDILKKRIRLECANYLRNVKETNARADVSDELKRYINVMQYTLSGNAAWSTNCPRYNGPTKFNELQLLRSEHGLAKYPSRWSQENRTSGLVEGDCHESKPNELKRKRNGVSVDDEMRTNGTNGAKKPAHVSQPSTDSIVLEDMVQLARTCDLPDLSDTVILQPYRYLTSLPSKGFRDQAIDSINKWLKVPPKSVKMIKDVVKMLHSASLMLDDLEDNSPLRRGKPSTHSIYGMAQTVNSATYQYITATDITAQLQNSETFHIFVEELQQLHVGQSYDLYWTHNTLCPTIAEYLKMVDMKTGGLFRMLTRMMIAESPVVDKVPNSDMNLFSCLIGRFFQIRDDYQNLASADYAKAKGFAEDLDEGKYSFTLIHCIQTLESKPELAGEMMQLRAFLMKRRHEGKLSQEAKQEVLVTMKKTESLQYTLSVLRELHSELEKEVENLEAKFGEENFTLRVMLELLKV.

The tract at residues 1-320 is (7Z)-ophiobola-7,19-dien-3-ol synthase; it reads MACKYSTLID…RYNGPTKFNE (320 aa). Mg(2+) contacts are provided by aspartate 93 and aspartate 97. Aspartate 93 lines the substrate pocket. Residues 93–97 carry the DDXXD 1 motif; sequence DDVID. Residues 180–183, asparagine 224, 228–232, and 311–312 contribute to the substrate site; these read RALD, SFEKE, and RY. Positions 224 to 232 match the NSE/DTE motif; sequence NDLFSFEKE. Residues 321-718 form a geranylfarnesyl diphosphate synthase region; sequence LQLLRSEHGL…LRVMLELLKV (398 aa). A disordered region spans residues 346–391; sequence LVEGDCHESKPNELKRKRNGVSVDDEMRTNGTNGAKKPAHVSQPST. Residues 349-359 are compositionally biased toward basic and acidic residues; sequence GDCHESKPNEL. The isopentenyl diphosphate site is built by lysine 429, arginine 432, and histidine 461. 2 residues coordinate Mg(2+): aspartate 468 and aspartate 472. The DDXXD 2 signature appears at 468 to 472; that stretch reads DDLED. A dimethylallyl diphosphate-binding site is contributed by arginine 477. Arginine 478 is an isopentenyl diphosphate binding site. Dimethylallyl diphosphate-binding residues include lysine 555, threonine 556, glutamine 594, asparagine 601, lysine 611, and lysine 621.

In the N-terminal section; belongs to the terpene synthase family. The protein in the C-terminal section; belongs to the FPP/GGPP synthase family. The cofactor is Mg(2+).

The enzyme catalyses isopentenyl diphosphate + (2E,6E)-farnesyl diphosphate = (2E,6E,10E)-geranylgeranyl diphosphate + diphosphate. The catalysed reaction is isopentenyl diphosphate + (2E,6E,10E)-geranylgeranyl diphosphate = (2E,6E,10E,14E)-geranylfarnesyl diphosphate + diphosphate. It catalyses the reaction (2E,6E,10E,14E)-geranylfarnesyl diphosphate + H2O = ophiobolin F + diphosphate. Its pathway is secondary metabolite biosynthesis; terpenoid biosynthesis. In terms of biological role, bifunctional sesterterpene synthase; part of the gene cluster that mediates the biosynthesis of the sesterterpenes ophiobolins, fungal phytotoxins with potential anti-cancer activities. The first step of the pathway is performed by the sesterterpene synthase oblA that possesses both prenyl transferase and terpene cyclase activity, converting isopentenyl diphosphate and dimethylallyl diphosphate into geranylfarnesyl diphosphate (GFPP) and further converting GFPP into ophiobolin F, respectively. Other sesterterpenoids (C(25) terpenoids) are found as minor products of oblA. It is expected that ophiobolin F is then oxidized to ophiobolin A via ophiobolin C and ophiobolin B intermediates by the combined action of the cytochrome P450 monooxygenase oblB and the FAD-dependent oxidoreductase oblC. Although oblB catalyzes multistep oxygenations at C5 and C21/C7 in a relatively efficient manner, it is unable to convert ophiobolin F to ophiobolin C and produces instead several unexpected derivatives. This chain is Ophiobolin F synthase oblA, found in Aspergillus clavatus (strain ATCC 1007 / CBS 513.65 / DSM 816 / NCTC 3887 / NRRL 1 / QM 1276 / 107).